Consider the following 447-residue polypeptide: Glutamyl-tRNA reductase (447 aa).

Residues 56–59 (TCNR), serine 119, 124–126 (ETQ), and glutamine 130 each bind substrate. Cysteine 57 serves as the catalytic Nucleophile. Position 201–206 (201–206 (GLGEMS)) interacts with NADP(+).

The protein belongs to the glutamyl-tRNA reductase family. As to quaternary structure, homodimer.

It catalyses the reaction (S)-4-amino-5-oxopentanoate + tRNA(Glu) + NADP(+) = L-glutamyl-tRNA(Glu) + NADPH + H(+). The protein operates within porphyrin-containing compound metabolism; protoporphyrin-IX biosynthesis; 5-aminolevulinate from L-glutamyl-tRNA(Glu): step 1/2. Its function is as follows. Catalyzes the NADPH-dependent reduction of glutamyl-tRNA(Glu) to glutamate 1-semialdehyde (GSA). The polypeptide is Glutamyl-tRNA reductase (Helicobacter acinonychis (strain Sheeba)).